The following is a 286-amino-acid chain: ATP synthase gamma chain (286 aa).

The protein belongs to the ATPase gamma chain family. F-type ATPases have 2 components, CF(1) - the catalytic core - and CF(0) - the membrane proton channel. CF(1) has five subunits: alpha(3), beta(3), gamma(1), delta(1), epsilon(1). CF(0) has three main subunits: a, b and c.

It localises to the cell membrane. Its function is as follows. Produces ATP from ADP in the presence of a proton gradient across the membrane. The gamma chain is believed to be important in regulating ATPase activity and the flow of protons through the CF(0) complex. This is ATP synthase gamma chain from Ureaplasma urealyticum serovar 10 (strain ATCC 33699 / Western).